A 29-amino-acid polypeptide reads, in one-letter code: uncharacterized protein (29 aa).

The helical transmembrane segment at 8–28 threads the bilayer; that stretch reads FALIVVLFILLIIVGTAFVGG.

It belongs to the SscA family.

It is found in the membrane. This is an uncharacterized protein from Bacillus subtilis (strain 168).